Reading from the N-terminus, the 82-residue chain is MPKRTLQGVVVSDKQDKTVVVRVDRRFTHPIYKKTIRRSKNYHAHDENNEFKAGDTVWIVESKPLSKLKRWTVVQSEKEKTA.

It belongs to the universal ribosomal protein uS17 family. As to quaternary structure, part of the 30S ribosomal subunit.

Its function is as follows. One of the primary rRNA binding proteins, it binds specifically to the 5'-end of 16S ribosomal RNA. The polypeptide is Small ribosomal subunit protein uS17 (Afipia carboxidovorans (strain ATCC 49405 / DSM 1227 / KCTC 32145 / OM5) (Oligotropha carboxidovorans)).